Reading from the N-terminus, the 196-residue chain is uncharacterized protein (196 aa).

Positions 12–66 (LRAAREAQKMSQRELSARSGLTQSHISQIERGTMEPGLGSLVDVARALDLEIVLA) constitute an HTH cro/C1-type domain. The H-T-H motif DNA-binding region spans 23 to 42 (QRELSARSGLTQSHISQIER). Residues 174–196 (VHRDRDDAVPRSAYALDEEDDNA) form a disordered region.

This is an uncharacterized protein from Sinorhizobium fredii (strain NBRC 101917 / NGR234).